The primary structure comprises 604 residues: Siderophore iron transporter mirB (604 aa).

The tract at residues 1-61 (MTIGSKFSLL…DNSSDEALPS (61 aa)) is disordered. The next 14 membrane-spanning stretches (helical) occupy residues 73–95 (AVTL…LVTL), 115–137 (FQSH…ALYI), 149–168 (AEGW…MMAA), 178–200 (ADVF…AADI), 207–224 (GIAF…AFAG), 237–259 (WRWG…YFVL), 289–311 (YFFA…FLLP), 326–343 (YIIA…LFVL), 363–385 (TVLG…NSYF), 400–422 (AGYV…GFAI), 427–449 (YFRW…MIHF), 454–476 (QYIG…FVLL), 489–511 (YVAA…GNAI), and 566–588 (AQAR…MFMV).

The protein belongs to the major facilitator superfamily.

The protein localises to the membrane. In terms of biological role, involved in the transport of siderophore triacestylfusarinine C and so has a role in iron homeostasis. This chain is Siderophore iron transporter mirB (mirB), found in Emericella nidulans (strain FGSC A4 / ATCC 38163 / CBS 112.46 / NRRL 194 / M139) (Aspergillus nidulans).